A 339-amino-acid polypeptide reads, in one-letter code: Pleckstrin homology domain protein opy1 (339 aa).

The PH 1 domain occupies 25–119 (RVLKSGWLIK…WVHVLRSTTG (95 aa)). Over residues 141–167 (ESEPNVQISDTDFDNISTEPRNQTTSP) the composition is skewed to polar residues. Positions 141–170 (ESEPNVQISDTDFDNISTEPRNQTTSPLDL) are disordered. The 98-residue stretch at 233–330 (KVLMQGTIHW…WVAALKTSID (98 aa)) folds into the PH 2 domain.

As to quaternary structure, interacts (via domain PH 1) with phosphatidylinositol 4-phosphate 5-kinase its3; the interaction is direct but opy1 does not appear to regulate its3 localization or function.

The protein resides in the cell tip. It is found in the cell membrane. In terms of biological role, binds phosphatidylinositol 4,5-bisphosphate (PtdIns(4,5)P2/PIP2) at the cell membrane. The chain is Pleckstrin homology domain protein opy1 from Schizosaccharomyces pombe (strain 972 / ATCC 24843) (Fission yeast).